The following is a 195-amino-acid chain: Imidazoleglycerol-phosphate dehydratase (195 aa).

Belongs to the imidazoleglycerol-phosphate dehydratase family.

The protein localises to the cytoplasm. The catalysed reaction is D-erythro-1-(imidazol-4-yl)glycerol 3-phosphate = 3-(imidazol-4-yl)-2-oxopropyl phosphate + H2O. Its pathway is amino-acid biosynthesis; L-histidine biosynthesis; L-histidine from 5-phospho-alpha-D-ribose 1-diphosphate: step 6/9. In Paracoccus denitrificans (strain Pd 1222), this protein is Imidazoleglycerol-phosphate dehydratase.